We begin with the raw amino-acid sequence, 360 residues long: Uptake hydrogenase small subunit (360 aa).

Positions 1 to 43 (MVETFYEVMRRQGISRRSFLKYCSLTATSLGLGPSFLPQIAHA) form a signal peptide, tat-type signal. Cys-60, Cys-63, Cys-158, Cys-192, His-230, Cys-233, Cys-258, and Cys-264 together coordinate [4Fe-4S] cluster. Cys-273, Cys-292, and Cys-295 together coordinate [3Fe-4S] cluster.

It belongs to the [NiFe]/[NiFeSe] hydrogenase small subunit family. In terms of assembly, heterodimer of a large and a small subunit. Requires [4Fe-4S] cluster as cofactor. [3Fe-4S] cluster is required as a cofactor. In terms of processing, predicted to be exported by the Tat system. The position of the signal peptide cleavage has been experimentally proven.

It localises to the cell membrane. The catalysed reaction is H2 + A = AH2. In terms of biological role, this enzyme recycles the H(2) produced by nitrogenase to increase the production of ATP and to protect nitrogenase against inhibition or damage by O(2) under carbon- or phosphate-limited conditions. This chain is Uptake hydrogenase small subunit (hoxK), found in Cupriavidus necator (strain ATCC 17699 / DSM 428 / KCTC 22496 / NCIMB 10442 / H16 / Stanier 337) (Ralstonia eutropha).